The primary structure comprises 714 residues: WD repeat and coiled-coil-containing protein (714 aa).

WD repeat units follow at residues 55 to 98 (GQFE…LEQN) and 154 to 194 (KGSG…LVPC). 2 disordered regions span residues 432–454 (EEST…SENF) and 531–564 (QASR…KEKN). Residues 567 to 595 (QLTQNMERIFTRFAEVQQCLSEIREFTQN) are a coiled coil. Residues 685–714 (RSARRKSPARPPSGADDFPPESPKSPSMEK) form a disordered region.

This chain is WD repeat and coiled-coil-containing protein (wdcp), found in Danio rerio (Zebrafish).